Reading from the N-terminus, the 446-residue chain is High mobility group B protein 13 (446 aa).

Disordered stretches follow at residues 1 to 43 (MSTV…TKSF) and 110 to 130 (LAQTEEEKKGKKKKKDCAETK). Over residues 11-22 (AKKSRNSRKALK) the composition is skewed to basic residues. DNA-binding regions (HMG box) lie at residues 129–197 (TKRP…TKEK) and 246–312 (PKQP…EGYK). Over residues 349–371 (NIIKKTKETAKNKKKNENVDPNK) the composition is skewed to basic and acidic residues. Residues 349–377 (NIIKKTKETAKNKKKNENVDPNKPKKPTS) form a disordered region. The HMG box 3 DNA-binding region spans 372–440 (PKKPTSSYFL…AYKKEVEEYN (69 aa)).

The protein belongs to the HMGB family.

The protein resides in the nucleus. The polypeptide is High mobility group B protein 13 (HMGB13) (Arabidopsis thaliana (Mouse-ear cress)).